Here is a 480-residue protein sequence, read N- to C-terminus: Protein nucleotidyltransferase YdiU (480 aa).

ATP is bound by residues glycine 87, glycine 89, arginine 90, lysine 110, aspartate 122, glycine 123, arginine 173, and arginine 180. The Proton acceptor role is filled by aspartate 245. The Mg(2+) site is built by asparagine 246 and aspartate 255. Aspartate 255 provides a ligand contact to ATP.

The protein belongs to the SELO family. Mg(2+) serves as cofactor. It depends on Mn(2+) as a cofactor.

It catalyses the reaction L-seryl-[protein] + ATP = 3-O-(5'-adenylyl)-L-seryl-[protein] + diphosphate. The catalysed reaction is L-threonyl-[protein] + ATP = 3-O-(5'-adenylyl)-L-threonyl-[protein] + diphosphate. It carries out the reaction L-tyrosyl-[protein] + ATP = O-(5'-adenylyl)-L-tyrosyl-[protein] + diphosphate. The enzyme catalyses L-histidyl-[protein] + UTP = N(tele)-(5'-uridylyl)-L-histidyl-[protein] + diphosphate. It catalyses the reaction L-seryl-[protein] + UTP = O-(5'-uridylyl)-L-seryl-[protein] + diphosphate. The catalysed reaction is L-tyrosyl-[protein] + UTP = O-(5'-uridylyl)-L-tyrosyl-[protein] + diphosphate. In terms of biological role, nucleotidyltransferase involved in the post-translational modification of proteins. It can catalyze the addition of adenosine monophosphate (AMP) or uridine monophosphate (UMP) to a protein, resulting in modifications known as AMPylation and UMPylation. This chain is Protein nucleotidyltransferase YdiU, found in Jannaschia sp. (strain CCS1).